Reading from the N-terminus, the 99-residue chain is Cell division protein FtsB (99 aa).

Topologically, residues 1-3 (MKF) are cytoplasmic. The chain crosses the membrane as a helical span at residues 4 to 21 (FVIALIVLLGLLQYRLWS). At 22 to 99 (GDNSLPEYFV…GDRSVSSPSQ (78 aa)) the chain is on the periplasmic side. Positions 31-73 (VLQKQIAAQQDGNAKLNERNQVLKEEIIDLKSGTEAIEERARN) form a coiled coil.

This sequence belongs to the FtsB family. As to quaternary structure, part of a complex composed of FtsB, FtsL and FtsQ.

The protein resides in the cell inner membrane. Its function is as follows. Essential cell division protein. May link together the upstream cell division proteins, which are predominantly cytoplasmic, with the downstream cell division proteins, which are predominantly periplasmic. In Shewanella sp. (strain MR-4), this protein is Cell division protein FtsB.